Here is an 815-residue protein sequence, read N- to C-terminus: Capsid vertex component 1 (815 aa).

2 disordered regions span residues 227–280 (THEQ…GDRE) and 795–815 (RAPS…TILY). 2 stretches are compositionally biased toward basic and acidic residues: residues 236–262 (PPKE…KDAA) and 271–280 (NRQREPGDRE). Residues 799–809 (DFSTTSTSGHE) are compositionally biased toward polar residues.

Belongs to the herpesviridae CVC1 protein family. As to quaternary structure, interacts (via C-terminus) with capsid vertex component 2/CVC2.

The protein resides in the virion. The protein localises to the host nucleus. Functionally, capsid vertex-specific component that plays a role during viral DNA encapsidation, assuring correct genome cleavage and presumably stabilizing capsids that contain full-length viral genomes. In Amazona oratrix (yellow-headed parrot), this protein is Capsid vertex component 1.